Consider the following 23-residue polypeptide: NADP phosphatase 2 (23 aa).

Homodimer.

The protein resides in the cytoplasm. This is NADP phosphatase 2 from Arthrobacter sp. (strain KM).